A 261-amino-acid polypeptide reads, in one-letter code: uncharacterized protein (261 aa).

Residues 1–22 form the signal peptide; the sequence is MRYLKKVTIYISLLILTIFIGG. Residue C23 is the site of N-palmitoyl cysteine attachment. C23 carries S-diacylglycerol cysteine lipidation.

This sequence belongs to the staphylococcal tandem lipoprotein family.

Its subcellular location is the cell membrane. This is an uncharacterized protein from Staphylococcus epidermidis (strain ATCC 35984 / DSM 28319 / BCRC 17069 / CCUG 31568 / BM 3577 / RP62A).